We begin with the raw amino-acid sequence, 400 residues long: Phosphoglycerate kinase (400 aa).

Residues D24–N26, R39, H62–K65, R123, and R156 each bind substrate. ATP contacts are provided by residues K207, G298, E329, and G356 to S359.

This sequence belongs to the phosphoglycerate kinase family. In terms of assembly, monomer.

It localises to the cytoplasm. It catalyses the reaction (2R)-3-phosphoglycerate + ATP = (2R)-3-phospho-glyceroyl phosphate + ADP. It participates in carbohydrate degradation; glycolysis; pyruvate from D-glyceraldehyde 3-phosphate: step 2/5. This Clostridioides difficile (strain 630) (Peptoclostridium difficile) protein is Phosphoglycerate kinase.